Here is a 448-residue protein sequence, read N- to C-terminus: tRNA modification GTPase MnmE (448 aa).

3 residues coordinate (6S)-5-formyl-5,6,7,8-tetrahydrofolate: R25, E82, and K121. The TrmE-type G domain maps to 217 to 372; sequence GLTTVIAGRP…LRQEIIRRAG (156 aa). A K(+)-binding site is contributed by N227. GTP-binding positions include 227 to 232, 246 to 252, 271 to 274, and 353 to 355; these read NVGKSS, TEIPGTT, DTAG, and SAR. Position 231 (S231) interacts with Mg(2+). K(+) is bound by residues T246, I248, and T251. A Mg(2+)-binding site is contributed by T252. K448 serves as a coordination point for (6S)-5-formyl-5,6,7,8-tetrahydrofolate.

It belongs to the TRAFAC class TrmE-Era-EngA-EngB-Septin-like GTPase superfamily. TrmE GTPase family. Homodimer. Heterotetramer of two MnmE and two MnmG subunits. The cofactor is K(+).

It localises to the cytoplasm. Exhibits a very high intrinsic GTPase hydrolysis rate. Involved in the addition of a carboxymethylaminomethyl (cmnm) group at the wobble position (U34) of certain tRNAs, forming tRNA-cmnm(5)s(2)U34. The chain is tRNA modification GTPase MnmE from Methylococcus capsulatus (strain ATCC 33009 / NCIMB 11132 / Bath).